Reading from the N-terminus, the 276-residue chain is Large ribosomal subunit protein uL2 (276 aa).

Positions 224–265 (VMNPVDHPHGGGEGRTASGRHPVSPWGLPTKGYKTRNNKRTD) are disordered.

This sequence belongs to the universal ribosomal protein uL2 family. Part of the 50S ribosomal subunit. Forms a bridge to the 30S subunit in the 70S ribosome.

Functionally, one of the primary rRNA binding proteins. Required for association of the 30S and 50S subunits to form the 70S ribosome, for tRNA binding and peptide bond formation. It has been suggested to have peptidyltransferase activity; this is somewhat controversial. Makes several contacts with the 16S rRNA in the 70S ribosome. The sequence is that of Large ribosomal subunit protein uL2 from Dichelobacter nodosus (strain VCS1703A).